The following is a 287-amino-acid chain: Acetylglutamate kinase (287 aa).

Substrate contacts are provided by residues 64 to 65 (GG), arginine 86, and asparagine 181.

Belongs to the acetylglutamate kinase family. ArgB subfamily.

The protein localises to the cytoplasm. It catalyses the reaction N-acetyl-L-glutamate + ATP = N-acetyl-L-glutamyl 5-phosphate + ADP. Its pathway is amino-acid biosynthesis; L-arginine biosynthesis; N(2)-acetyl-L-ornithine from L-glutamate: step 2/4. Functionally, catalyzes the ATP-dependent phosphorylation of N-acetyl-L-glutamate. This is Acetylglutamate kinase from Desulforamulus reducens (strain ATCC BAA-1160 / DSM 100696 / MI-1) (Desulfotomaculum reducens).